A 198-amino-acid chain; its full sequence is Recombination protein RecR (198 aa).

The segment at 58–73 adopts a C4-type zinc-finger fold; that stretch reads CSTCGNFTDTDPCALC. In terms of domain architecture, Toprim spans 81–175; it reads STICVVEQPK…KVTRIAAGIP (95 aa).

Belongs to the RecR family.

In terms of biological role, may play a role in DNA repair. It seems to be involved in an RecBC-independent recombinational process of DNA repair. It may act with RecF and RecO. This chain is Recombination protein RecR, found in Clostridium botulinum (strain Alaska E43 / Type E3).